The following is a 607-amino-acid chain: Chaperone protein dnaK (607 aa).

Residues 579-591 (KASETSNAKTNGK) are compositionally biased toward polar residues. The tract at residues 579-607 (KASETSNAKTNGKASEKEDVIDADFKAQE) is disordered. Basic and acidic residues predominate over residues 592–607 (ASEKEDVIDADFKAQE).

Belongs to the heat shock protein 70 family.

The protein resides in the plastid. Its subcellular location is the chloroplast. Its function is as follows. Acts as a chaperone. The polypeptide is Chaperone protein dnaK (Cyanidioschyzon merolae (strain NIES-3377 / 10D) (Unicellular red alga)).